A 23-amino-acid chain; its full sequence is Potassium channel toxin alpha-KTx 13.3 (23 aa).

3 disulfide bridges follow: cysteine 2–cysteine 15, cysteine 5–cysteine 20, and cysteine 9–cysteine 22. An interaction with Ca(2+)-activated K(+) channels region spans residues 13–20 (GKCINGRC). Tyrosine 23 carries the tyrosine amide modification.

In terms of tissue distribution, expressed by the venom gland.

It localises to the secreted. Functionally, reversibly blocks Shaker B potassium channels, with a dissociation constant of 200 nM. The chain is Potassium channel toxin alpha-KTx 13.3 from Tityus pachyurus (Colombian scorpion).